The sequence spans 236 residues: Pyridoxine 5'-phosphate synthase (236 aa).

3-amino-2-oxopropyl phosphate is bound at residue N6. D8 to H9 is a binding site for 1-deoxy-D-xylulose 5-phosphate. Residue R17 participates in 3-amino-2-oxopropyl phosphate binding. H42 (proton acceptor) is an active-site residue. 1-deoxy-D-xylulose 5-phosphate is bound by residues R44 and H49. Residue E69 is the Proton acceptor of the active site. T99 lines the 1-deoxy-D-xylulose 5-phosphate pocket. Residue H190 is the Proton donor of the active site. 3-amino-2-oxopropyl phosphate-binding positions include G191 and G212–H213.

It belongs to the PNP synthase family. Homooctamer; tetramer of dimers.

It localises to the cytoplasm. The enzyme catalyses 3-amino-2-oxopropyl phosphate + 1-deoxy-D-xylulose 5-phosphate = pyridoxine 5'-phosphate + phosphate + 2 H2O + H(+). Its pathway is cofactor biosynthesis; pyridoxine 5'-phosphate biosynthesis; pyridoxine 5'-phosphate from D-erythrose 4-phosphate: step 5/5. Catalyzes the complicated ring closure reaction between the two acyclic compounds 1-deoxy-D-xylulose-5-phosphate (DXP) and 3-amino-2-oxopropyl phosphate (1-amino-acetone-3-phosphate or AAP) to form pyridoxine 5'-phosphate (PNP) and inorganic phosphate. The sequence is that of Pyridoxine 5'-phosphate synthase from Chloroherpeton thalassium (strain ATCC 35110 / GB-78).